The following is a 123-amino-acid chain: Large ribosomal subunit protein bL17 (123 aa).

Belongs to the bacterial ribosomal protein bL17 family. In terms of assembly, part of the 50S ribosomal subunit. Contacts protein L32.

This is Large ribosomal subunit protein bL17 from Exiguobacterium sibiricum (strain DSM 17290 / CCUG 55495 / CIP 109462 / JCM 13490 / 255-15).